Reading from the N-terminus, the 101-residue chain is MIEEIIKKTEKGVLIDIEVTTNAKKNEIGKINKWRKRLEVKIKEQPIEGRANKAILKFLKEIFKTDVELNPVTTSPQKTVLISCDTKEYVVNILKREIKSV.

This sequence belongs to the UPF0235 family.

This is UPF0235 protein Mevan_0378 from Methanococcus vannielii (strain ATCC 35089 / DSM 1224 / JCM 13029 / OCM 148 / SB).